The primary structure comprises 216 residues: MSQTDILYACVSYKGVCLVEHKIANGNFIDLARRLITKIPPTSKKIYTSENHNFHYISENDLAFLCLCHEKLGVQIPSEFLSDIRQQFIRSYGQSFSQNSPTATYDPFIRVLEERMKYYSNPKSNKMNLVMDQVSEAKGALTDAIEKTIHRGEKIEIIVDKTERLQSESFVFKSNSVALKRKLWWQNKKLAIAIGLVVCILIAVITLALLKYFKVI.

At 1-189 (MSQTDILYAC…KRKLWWQNKK (189 aa)) the chain is on the cytoplasmic side. Residues 6–112 (ILYACVSYKG…ATYDPFIRVL (107 aa)) enclose the Longin domain. The region spanning 126-186 (KMNLVMDQVS…VALKRKLWWQ (61 aa)) is the v-SNARE coiled-coil homology domain. The helical; Anchor for type IV membrane protein transmembrane segment at 190-210 (LAIAIGLVVCILIAVITLALL) threads the bilayer. Residues 211-216 (KYFKVI) lie on the Vesicular side of the membrane.

Belongs to the synaptobrevin family. In terms of assembly, component of the SNARE complex composed of syn7A, syn8A, vamp7A and vti1A.

Its subcellular location is the cytoplasmic vesicle. The protein localises to the secretory vesicle membrane. It is found in the golgi apparatus. It localises to the trans-Golgi network membrane. The protein resides in the late endosome membrane. Its subcellular location is the lysosome membrane. The protein localises to the endoplasmic reticulum membrane. It is found in the phagosome membrane. Involved in the targeting and/or fusion of transport vesicles to their target membrane during transport of proteins from the early endosome to the lysosome. Required for heterotypic fusion of late endosomes with lysosomes and homotypic lysosomal fusion. Required for calcium regulated lysosomal exocytosis. This Dictyostelium discoideum (Social amoeba) protein is Vesicle-associated membrane protein 7A.